Here is a 115-residue protein sequence, read N- to C-terminus: Toxin CSTX-9 (115 aa).

The signal sequence occupies residues 1 to 20 (MKVLVICAVLFLAIFSNSSA). Residues 21–47 (ETEDDFLEDESFEADDVIPFLAREQVR) constitute a propeptide that is removed on maturation. Disulfide bonds link Cys53–Cys68, Cys60–Cys77, Cys67–Cys95, and Cys79–Cys93.

The protein belongs to the neurotoxin 19 (CSTX) family. As to quaternary structure, monomer. Interacts with CSTX-13 (AC P83919) (Kd=370 nM), but does not interact with CSTX-1 (AC P81694). In terms of tissue distribution, expressed by the venom gland.

The protein resides in the secreted. The protein localises to the target cell membrane. Its function is as follows. Synergistic toxin that induces or increases a cytolytic effect when combined with CSTX-1 (AC P81694) or CSTX-13 (AC P83919). Potassium ions and M-ctenitoxin-Cs1a (AC P83619) have also an effect on its activity. When alone, has no insecticidal activity. The chain is Toxin CSTX-9 from Cupiennius salei (American wandering spider).